The sequence spans 268 residues: Tryptophan synthase alpha chain (268 aa).

Residues E49 and D60 each act as proton acceptor in the active site.

The protein belongs to the TrpA family. Tetramer of two alpha and two beta chains.

It catalyses the reaction (1S,2R)-1-C-(indol-3-yl)glycerol 3-phosphate + L-serine = D-glyceraldehyde 3-phosphate + L-tryptophan + H2O. It functions in the pathway amino-acid biosynthesis; L-tryptophan biosynthesis; L-tryptophan from chorismate: step 5/5. In terms of biological role, the alpha subunit is responsible for the aldol cleavage of indoleglycerol phosphate to indole and glyceraldehyde 3-phosphate. This Haemophilus influenzae (strain PittGG) protein is Tryptophan synthase alpha chain.